The chain runs to 553 residues: Membrane protein insertase YidC (553 aa).

The chain crosses the membrane as a helical span at residues isoleucine 3 to tryptophan 23. Residues alanine 44 to alanine 64 form a disordered region. 4 helical membrane passes run leucine 359–phenylalanine 379, leucine 429–leucine 449, leucine 467–glutamine 487, and proline 507–valine 527.

The protein belongs to the OXA1/ALB3/YidC family. Type 1 subfamily. Interacts with the Sec translocase complex via SecD. Specifically interacts with transmembrane segments of nascent integral membrane proteins during membrane integration.

The protein localises to the cell inner membrane. Its function is as follows. Required for the insertion and/or proper folding and/or complex formation of integral membrane proteins into the membrane. Involved in integration of membrane proteins that insert both dependently and independently of the Sec translocase complex, as well as at least some lipoproteins. Aids folding of multispanning membrane proteins. This is Membrane protein insertase YidC from Ralstonia nicotianae (strain ATCC BAA-1114 / GMI1000) (Ralstonia solanacearum).